The chain runs to 847 residues: Leucine--tRNA ligase (847 aa).

The short motif at P43–H53 is the 'HIGH' region element. The short motif at K607 to S611 is the 'KMSKS' region element. K610 contacts ATP.

The protein belongs to the class-I aminoacyl-tRNA synthetase family.

It is found in the cytoplasm. It catalyses the reaction tRNA(Leu) + L-leucine + ATP = L-leucyl-tRNA(Leu) + AMP + diphosphate. This Buchnera aphidicola subsp. Cinara cedri (strain Cc) protein is Leucine--tRNA ligase.